A 456-amino-acid chain; its full sequence is 1,3-beta-glucanosyltransferase gas4 (456 aa).

Residues 1-25 (MGVANIIYALFLLGPSIFLKATAQT) form the signal peptide. C68 and C97 are oxidised to a cystine. (1,3-beta-D-glucosyl)n is bound by residues Y86, N156, E157, D197, and R202. The Proton donor role is filled by E157. 2 disulfide bridges follow: C211/C350 and C229/C260. N-linked (GlcNAc...) asparagine glycosylation is present at N248. Catalysis depends on E257, which acts as the Nucleophile. Residue Y296 participates in (1,3-beta-D-glucosyl)n binding. 2 disordered regions span residues 334–353 (NPKG…CPAN) and 384–434 (IEGP…ESGS). N-linked (GlcNAc...) asparagine glycans are attached at residues N353 and N415. Over residues 417–434 (TSTTSYTSGMTSSSESGS) the composition is skewed to low complexity. S432 is lipidated: GPI-anchor amidated serine. Residues 433 to 456 (GSSKIGVAFCQALFITVLIATLSF) constitute a propeptide, removed in mature form.

Belongs to the glycosyl hydrolase 72 family.

The protein resides in the cell membrane. Its function is as follows. Splits internally a 1,3-beta-glucan molecule and transfers the newly generated reducing end (the donor) to the non-reducing end of another 1,3-beta-glucan molecule (the acceptor) forming a 1,3-beta linkage, resulting in the elongation of 1,3-beta-glucan chains in the cell wall. Involved in spore wall assembly. This chain is 1,3-beta-glucanosyltransferase gas4 (gas4), found in Schizosaccharomyces pombe (strain 972 / ATCC 24843) (Fission yeast).